The sequence spans 153 residues: Adenosine 5'-monophosphoramidase HINT3 (153 aa).

Positions 20 to 130 (IFCRIANKQE…PASQLGFLSR (111 aa)) constitute an HIT domain. AMP contacts are provided by residues 46 to 47 (DI) and 115 to 117 (HLH). Positions 113–117 (HLHLH) match the Histidine triad motif motif. Catalysis depends on His-115, which acts as the Tele-AMP-histidine intermediate.

Belongs to the HINT family. As to quaternary structure, forms dimers to octamers and even larger oligomer.

Its subcellular location is the cytoplasm. The protein localises to the nucleus. It carries out the reaction adenosine 5'-phosphoramidate + H2O = AMP + NH4(+). In terms of biological role, exhibits adenosine 5'-monophosphoramidase activity, hydrolyzing purine nucleotide phosphoramidates with a single phosphate group such as adenosine 5'monophosphoramidate (AMP-NH2) to yield AMP and NH2. Hydrolyzes lysyl-AMP (AMP-N-epsilon-(N-alpha-acetyl lysine methyl ester)) generated by lysine tRNA ligase. This is Adenosine 5'-monophosphoramidase HINT3 (hint3) from Xenopus tropicalis (Western clawed frog).